Reading from the N-terminus, the 448-residue chain is ATP synthase subunit b-delta (448 aa).

The tract at residues 1–168 (MSTFIGQLIG…GSVGAAKRPV (168 aa)) is ATP synthase subunit b. A helical membrane pass occupies residues 4 to 24 (FIGQLIGFAVIVFLVVKYVVP). Positions 169–448 (PGGYSGMHAA…LSAAALHLPN (280 aa)) are ATP synthase subunit delta.

In the N-terminal section; belongs to the ATPase B chain family. The protein in the C-terminal section; belongs to the ATPase delta chain family. F-type ATPases have 2 components, F(1) - the catalytic core - and F(0) - the membrane proton channel. F(1) has five subunits: alpha(3), beta(3), gamma(1), delta(1), epsilon(1). F(0) has three main subunits: a(1), b(2) and c(10-14). The alpha and beta chains form an alternating ring which encloses part of the gamma chain. F(1) is attached to F(0) by a central stalk formed by the gamma and epsilon chains, while a peripheral stalk is formed by the delta and b chains.

Its subcellular location is the cell membrane. F(1)F(0) ATP synthase produces ATP from ADP in the presence of a proton or sodium gradient. F-type ATPases consist of two structural domains, F(1) containing the extramembraneous catalytic core and F(0) containing the membrane proton channel, linked together by a central stalk and a peripheral stalk. During catalysis, ATP synthesis in the catalytic domain of F(1) is coupled via a rotary mechanism of the central stalk subunits to proton translocation. Its function is as follows. This fusion protein includes a component of the F(0) channel (subunit b) and of the F(1) subunit (subunit delta). Two copies of subunit b and one of delta together form the peripheral 'stator' stalk which links F(1) to F(0). This Mycobacteroides abscessus (strain ATCC 19977 / DSM 44196 / CCUG 20993 / CIP 104536 / JCM 13569 / NCTC 13031 / TMC 1543 / L948) (Mycobacterium abscessus) protein is ATP synthase subunit b-delta (atpFH).